Here is a 274-residue protein sequence, read N- to C-terminus: Outer surface protein A (274 aa).

Residues 1–16 (MKKYLLGIGLILALIA) form the signal peptide. A lipid anchor (N-palmitoyl cysteine) is attached at C17. C17 carries the S-diacylglycerol cysteine lipid modification.

It belongs to the OspA lipoprotein family.

It is found in the cell outer membrane. The protein localises to the cell surface. This is Outer surface protein A from Borreliella burgdorferi (Lyme disease spirochete).